The chain runs to 1113 residues: Myosin-binding protein 1 (1113 aa).

The helical transmembrane segment at 12–34 (LAFNEWLLMFMLFVNSIFSYVIA) threads the bilayer. The tract at residues 209–229 (ESEAVFSDTEPKQESSLNHLP) is disordered. A GTD-binding domain is found at 888–986 (SEGDRLKRQV…DLEAEIEYFR (99 aa)).

In terms of assembly, interacts with myosin XI-K, XI-I and XI-1. Expressed in leaf epidermal cells, roots and root hairs.

Its subcellular location is the endomembrane system. Its function is as follows. Membrane-anchored myosin receptors that define a distinct, plant-specific transport vesicle compartment. In Arabidopsis thaliana (Mouse-ear cress), this protein is Myosin-binding protein 1.